The sequence spans 547 residues: Chaperonin GroEL (547 aa).

Residues threonine 30 to proline 33, lysine 51, aspartate 87 to threonine 91, glycine 415, asparagine 479 to alanine 481, and aspartate 495 each bind ATP.

The protein belongs to the chaperonin (HSP60) family. In terms of assembly, forms a cylinder of 14 subunits composed of two heptameric rings stacked back-to-back. Interacts with the co-chaperonin GroES.

It localises to the cytoplasm. It carries out the reaction ATP + H2O + a folded polypeptide = ADP + phosphate + an unfolded polypeptide.. Its function is as follows. Together with its co-chaperonin GroES, plays an essential role in assisting protein folding. The GroEL-GroES system forms a nano-cage that allows encapsulation of the non-native substrate proteins and provides a physical environment optimized to promote and accelerate protein folding. In Pseudomonas paraeruginosa (strain DSM 24068 / PA7) (Pseudomonas aeruginosa (strain PA7)), this protein is Chaperonin GroEL.